The chain runs to 247 residues: tRNA pseudouridine synthase A (247 aa).

The active-site Nucleophile is Asp-53. Residue Tyr-111 participates in substrate binding.

The protein belongs to the tRNA pseudouridine synthase TruA family. Homodimer.

It carries out the reaction uridine(38/39/40) in tRNA = pseudouridine(38/39/40) in tRNA. Functionally, formation of pseudouridine at positions 38, 39 and 40 in the anticodon stem and loop of transfer RNAs. The chain is tRNA pseudouridine synthase A from Bacillus pumilus (strain SAFR-032).